A 358-amino-acid chain; its full sequence is Vanillin synthase (358 aa).

A signal peptide spans methionine 1 to alanine 21. Residues glycine 22–isoleucine 140 constitute a propeptide, activation peptide. N-linked (GlcNAc...) asparagine glycosylation occurs at asparagine 125. 2 cysteine pairs are disulfide-bonded: cysteine 162–cysteine 205 and cysteine 196–cysteine 238. Residue cysteine 165 is part of the active site. A glycan (N-linked (GlcNAc...) asparagine) is linked at asparagine 254. Cysteine 296 and cysteine 346 are disulfide-bonded. Residues histidine 305 and asparagine 325 contribute to the active site.

This sequence belongs to the peptidase C1 family.

It catalyses the reaction (E)-ferulate + H2O = vanillin + acetate. The catalysed reaction is 4-O-beta-D-glucosyl-trans-ferulate + H2O = 4-O-beta-D-glucosyl-vanillin + acetate. Its pathway is aromatic compound metabolism; phenylpropanoid biosynthesis. Its function is as follows. Involved in the biosynthesis of vanillin and derivative natural products. Catalyzes the double carbon bond cleavage of ferulic acid to vanillin and of respective glucosides. This is Vanillin synthase from Glechoma hederacea (Ground-ivy).